We begin with the raw amino-acid sequence, 653 residues long: MRSFLLASLASLSVISVYGHPHARSTLTRRGVDLDSYRMKHAATYKNVAEVVADHNINTLAKRASAQDIATDLVKATIPNATFRLVSDSYVSDNGVAHFYFKQTANGLDIDTADFNVNIGRDGNVFSFGNSFYKGDVPAPPSLTKRDGSEPVAALKSAVDVLALPVSAQSATAEPKDATETYAIKKTTGTVSEPEARLVYLVDDEGKLALTWRVETDIMSNWLLSYVDVKDGSKVHAVVDYSADATYNVYPWGINDPTEGERQLVTDGFYPPASEFGWHNDGKMAFKTTRGNNGIAHTNWDNKMSGFLDLPRPTSEDLNFDYPFSLNQTDFHDYGNASITQLFYTSNKYHDLLYTLGFNEKAGNFEINNNGAGGVGQDFVYLNAQDGERFNNANFATPPDGSPARMRMYIWNQTTPFRDCSFEAGVVIHEYTHGLSNRLTGGPANSGCLSMLESGGMGEGWSDFFATAIRLKPSDTRAKDYTMGEWISGSEFGIRNYKYSTNLEVNPQVYTDVDQYTRVHPIGNIWASMLYEVLWNLIDKYGKNDDWLPEFNSAGVPKDGKYLAMKLALDGMALQPCNPTFVSARDAIIDADKALTGGANLCEIWSGFAKRGLGEKAVYSTGGRTNSFDVPAGVCNNSTVSSQARRVKLPLSV.

The first 19 residues, M1–G19, serve as a signal peptide directing secretion. Residues H20 to D244 constitute a propeptide that is removed on maturation. N327, N336, and N412 each carry an N-linked (GlcNAc...) asparagine glycan. H429 lines the Zn(2+) pocket. Residue E430 is part of the active site. H433 contacts Zn(2+). N636 and N637 each carry an N-linked (GlcNAc...) asparagine glycan.

The protein belongs to the peptidase M36 family. Requires Zn(2+) as cofactor.

It localises to the secreted. Functionally, secreted metalloproteinase that allows assimilation of proteinaceous substrates. This chain is Extracellular metalloproteinase (MEP), found in Pyrenophora tritici-repentis (strain Pt-1C-BFP) (Wheat tan spot fungus).